Reading from the N-terminus, the 330-residue chain is Membrane progestin receptor gamma (330 aa).

At 1–51 the chain is on the cytoplasmic side; the sequence is MLSLKLPRLFRIDQVPQVFHEQGILFGYRHPQSSATACILSLFQMTNETLN. A helical transmembrane segment spans residues 52–72; that stretch reads IWTHLLPFWFFVWRFMTALYV. Over 73–81 the chain is Extracellular; sequence TDIQNDSYS. The helical transmembrane segment at 82-101 threads the bilayer; it reads WPMLVYMCTSCVYPLASSCA. The Cytoplasmic segment spans residues 102–113; it reads HTFSSMSKNARH. The helical transmembrane segment at 114–134 threads the bilayer; that stretch reads ICYFLDYGAVNLFSLGSAIAY. Topologically, residues 135-141 are extracellular; the sequence is SAYTFPD. The helical transmembrane segment at 142-162 threads the bilayer; that stretch reads ALVCSTFHECYVALAVLNTIL. The Cytoplasmic segment spans residues 163–186; that stretch reads STGLSCYSRFLELQKPRLCKLLRV. Residues 187-207 traverse the membrane as a helical segment; sequence LAFAYPYTWDSLPIFYRLFLF. Topologically, residues 208-253 are extracellular; sequence PGESSRNEAMLYHQKHMGMTLLASFFYSAHLPERLAPGRFDYIGHS. A helical transmembrane segment spans residues 254–274; that stretch reads HQLFHVCVILATHLQMEAILL. Residues 275-294 are Cytoplasmic-facing; the sequence is DKTLRREWLLATSRPFSFPQ. The helical transmembrane segment at 295–315 threads the bilayer; sequence IAAAMLLCIIFSLSNIIYFSA. Over 316 to 330 the chain is Extracellular; sequence ALYRIPEPELHEKET.

It belongs to the ADIPOR family.

The protein resides in the cell membrane. Functionally, plasma membrane progesterone (P4) receptor coupled to G proteins. Seems to act through a G(i) mediated pathway. May be involved in oocyte maturation. The chain is Membrane progestin receptor gamma from Mus musculus (Mouse).